The primary structure comprises 145 residues: Large ribosomal subunit protein uL16 (145 aa).

Over residues 1–17 (MLMPKRVKHRRVHRGRM) the composition is skewed to basic residues. The segment at 1–22 (MLMPKRVKHRRVHRGRMTGKAT) is disordered.

It belongs to the universal ribosomal protein uL16 family. As to quaternary structure, part of the 50S ribosomal subunit.

Binds 23S rRNA and is also seen to make contacts with the A and possibly P site tRNAs. The chain is Large ribosomal subunit protein uL16 from Ruminiclostridium cellulolyticum (strain ATCC 35319 / DSM 5812 / JCM 6584 / H10) (Clostridium cellulolyticum).